The sequence spans 71 residues: Cold shock-like protein CspB (71 aa).

Positions 7 to 67 (GLVKWFNADK…GAKGPAAANV (61 aa)) constitute a CSD domain.

It is found in the cytoplasm. The protein is Cold shock-like protein CspB (cspB) of Escherichia coli (strain K12).